The following is a 179-amino-acid chain: Dual-action ribosomal maturation protein DarP (179 aa).

The protein belongs to the DarP family.

It is found in the cytoplasm. In terms of biological role, member of a network of 50S ribosomal subunit biogenesis factors which assembles along the 30S-50S interface, preventing incorrect 23S rRNA structures from forming. Promotes peptidyl transferase center (PTC) maturation. This Photorhabdus laumondii subsp. laumondii (strain DSM 15139 / CIP 105565 / TT01) (Photorhabdus luminescens subsp. laumondii) protein is Dual-action ribosomal maturation protein DarP.